A 421-amino-acid polypeptide reads, in one-letter code: D-amino acid dehydrogenase (421 aa).

An FAD-binding site is contributed by Val3–Tyr17.

This sequence belongs to the DadA oxidoreductase family. The cofactor is FAD.

The catalysed reaction is a D-alpha-amino acid + A + H2O = a 2-oxocarboxylate + AH2 + NH4(+). It participates in amino-acid degradation; D-alanine degradation; NH(3) and pyruvate from D-alanine: step 1/1. In terms of biological role, oxidative deamination of D-amino acids. The sequence is that of D-amino acid dehydrogenase from Allorhizobium ampelinum (strain ATCC BAA-846 / DSM 112012 / S4) (Agrobacterium vitis (strain S4)).